Here is a 424-residue protein sequence, read N- to C-terminus: Serine--tRNA ligase (424 aa).

232–234 (TAE) is a binding site for L-serine. Residue 263 to 265 (RQE) coordinates ATP. Position 286 (Glu286) interacts with L-serine. 350-353 (EIGS) contacts ATP. L-serine is bound at residue Ser386.

The protein belongs to the class-II aminoacyl-tRNA synthetase family. Type-1 seryl-tRNA synthetase subfamily. Homodimer. The tRNA molecule binds across the dimer.

The protein localises to the cytoplasm. The catalysed reaction is tRNA(Ser) + L-serine + ATP = L-seryl-tRNA(Ser) + AMP + diphosphate + H(+). The enzyme catalyses tRNA(Sec) + L-serine + ATP = L-seryl-tRNA(Sec) + AMP + diphosphate + H(+). It functions in the pathway aminoacyl-tRNA biosynthesis; selenocysteinyl-tRNA(Sec) biosynthesis; L-seryl-tRNA(Sec) from L-serine and tRNA(Sec): step 1/1. Its function is as follows. Catalyzes the attachment of serine to tRNA(Ser). Is also able to aminoacylate tRNA(Sec) with serine, to form the misacylated tRNA L-seryl-tRNA(Sec), which will be further converted into selenocysteinyl-tRNA(Sec). This chain is Serine--tRNA ligase, found in Onion yellows phytoplasma (strain OY-M).